Reading from the N-terminus, the 433-residue chain is Protoheme IX farnesyltransferase 2 (433 aa).

A unknown region spans residues 1-164 (MQRFTGLVTA…LTKPRLMWLL (164 aa)). Transmembrane regions (helical) follow at residues 4–24 (FTGL…LGVA), 35–55 (AVAH…AAAL), 67–87 (WGVT…MAVL), 95–115 (LHLF…TWHL), 160–180 (LMWL…VTGA), 184–204 (GVTI…AGTF), 236–256 (AFGV…VNPL), 257–277 (AAAL…VVLK), 282–304 (WNTV…AVAG), 308–330 (LPAL…NLAI), 357–377 (ILYW…VAGF), 378–398 (GPVY…TVVV), and 413–433 (HASN…TMVI). Positions 165–430 (CLLALSGMAL…ALLVAILVET (266 aa)) are protoheme IX prenyltransferase.

This sequence in the C-terminal section; belongs to the UbiA prenyltransferase family. Protoheme IX farnesyltransferase subfamily.

The protein resides in the cell membrane. It carries out the reaction heme b + (2E,6E)-farnesyl diphosphate + H2O = Fe(II)-heme o + diphosphate. The protein operates within porphyrin-containing compound metabolism; heme O biosynthesis; heme O from protoheme: step 1/1. In terms of biological role, converts heme B (protoheme IX) to heme O by substitution of the vinyl group on carbon 2 of heme B porphyrin ring with a hydroxyethyl farnesyl side group. In Natronomonas pharaonis (strain ATCC 35678 / DSM 2160 / CIP 103997 / JCM 8858 / NBRC 14720 / NCIMB 2260 / Gabara) (Halobacterium pharaonis), this protein is Protoheme IX farnesyltransferase 2 (ctaB2).